The chain runs to 482 residues: tRNA sulfurtransferase (482 aa).

In terms of domain architecture, THUMP spans 61 to 165; the sequence is LTIRDALTRI…DDRLLLIKGR (105 aa). ATP is bound by residues 183-184, Lys265, Gly287, and Gln296; that span reads LI. Cys344 and Cys456 are disulfide-bonded. The Rhodanese domain occupies 404-482; the sequence is FGPNDVILDI…GFNNVKVYRP (79 aa). Cys456 acts as the Cysteine persulfide intermediate in catalysis.

This sequence belongs to the ThiI family.

The protein resides in the cytoplasm. It catalyses the reaction [ThiI sulfur-carrier protein]-S-sulfanyl-L-cysteine + a uridine in tRNA + 2 reduced [2Fe-2S]-[ferredoxin] + ATP + H(+) = [ThiI sulfur-carrier protein]-L-cysteine + a 4-thiouridine in tRNA + 2 oxidized [2Fe-2S]-[ferredoxin] + AMP + diphosphate. It carries out the reaction [ThiS sulfur-carrier protein]-C-terminal Gly-Gly-AMP + S-sulfanyl-L-cysteinyl-[cysteine desulfurase] + AH2 = [ThiS sulfur-carrier protein]-C-terminal-Gly-aminoethanethioate + L-cysteinyl-[cysteine desulfurase] + A + AMP + 2 H(+). It participates in cofactor biosynthesis; thiamine diphosphate biosynthesis. Its function is as follows. Catalyzes the ATP-dependent transfer of a sulfur to tRNA to produce 4-thiouridine in position 8 of tRNAs, which functions as a near-UV photosensor. Also catalyzes the transfer of sulfur to the sulfur carrier protein ThiS, forming ThiS-thiocarboxylate. This is a step in the synthesis of thiazole, in the thiamine biosynthesis pathway. The sulfur is donated as persulfide by IscS. In Shigella flexneri, this protein is tRNA sulfurtransferase.